The sequence spans 121 residues: Prefoldin subunit beta (121 aa).

This sequence belongs to the prefoldin subunit beta family. As to quaternary structure, heterohexamer of two alpha and four beta subunits.

The protein localises to the cytoplasm. Its function is as follows. Molecular chaperone capable of stabilizing a range of proteins. Seems to fulfill an ATP-independent, HSP70-like function in archaeal de novo protein folding. In Methanosphaerula palustris (strain ATCC BAA-1556 / DSM 19958 / E1-9c), this protein is Prefoldin subunit beta.